Reading from the N-terminus, the 185-residue chain is MSETDSTFHEMREPQLEKVVVHMAVGEGGRELANAEEILQEIAGQTAVRTTATRAASQFGAREGDPIGAKVTLRGADAQSFLEKALPLVTISERQFDETGNFSFGVEEHTTFPSQEYDPQIGIYGLDVTVNLTRPGYRVTKRDKASQPIPSRHRLTPSDAVQFIESEFTVDITRVSADTRDGGDN.

Belongs to the universal ribosomal protein uL5 family. As to quaternary structure, part of the 50S ribosomal subunit; contacts the 5S rRNA and probably tRNA. Forms a bridge to the 30S subunit in the 70S ribosome.

Its function is as follows. This is one of the proteins that bind and probably mediate the attachment of the 5S RNA into the large ribosomal subunit, where it forms part of the central protuberance. In the 70S ribosome it contacts protein S13 of the 30S subunit (bridge B1b), connecting the 2 subunits; this bridge is implicated in subunit movement. May contact the P site tRNA; the 5S rRNA and some of its associated proteins might help stabilize positioning of ribosome-bound tRNAs. This chain is Large ribosomal subunit protein uL5, found in Haloquadratum walsbyi (strain DSM 16790 / HBSQ001).